The sequence spans 342 residues: Nucleoid-associated protein SO_2177 (342 aa).

The protein belongs to the YejK family.

It localises to the cytoplasm. It is found in the nucleoid. This is Nucleoid-associated protein SO_2177 from Shewanella oneidensis (strain ATCC 700550 / JCM 31522 / CIP 106686 / LMG 19005 / NCIMB 14063 / MR-1).